The chain runs to 603 residues: Elongation factor 4 (603 aa).

The region spanning 2–184 (NHIRNFSIIA…AVVARMPPPR (183 aa)) is the tr-type G domain. Residues 14-19 (DHGKST) and 131-134 (NKMD) contribute to the GTP site.

It belongs to the TRAFAC class translation factor GTPase superfamily. Classic translation factor GTPase family. LepA subfamily.

The protein localises to the cell inner membrane. The enzyme catalyses GTP + H2O = GDP + phosphate + H(+). Its function is as follows. Required for accurate and efficient protein synthesis under certain stress conditions. May act as a fidelity factor of the translation reaction, by catalyzing a one-codon backward translocation of tRNAs on improperly translocated ribosomes. Back-translocation proceeds from a post-translocation (POST) complex to a pre-translocation (PRE) complex, thus giving elongation factor G a second chance to translocate the tRNAs correctly. Binds to ribosomes in a GTP-dependent manner. The polypeptide is Elongation factor 4 (Albidiferax ferrireducens (strain ATCC BAA-621 / DSM 15236 / T118) (Rhodoferax ferrireducens)).